A 192-amino-acid chain; its full sequence is UPF0312 protein Psyr_0457 (192 aa).

A signal peptide spans 1–23; it reads MLKKSLAALALGTALLSAGQAMA.

Belongs to the UPF0312 family. Type 1 subfamily.

It is found in the periplasm. This is UPF0312 protein Psyr_0457 from Pseudomonas syringae pv. syringae (strain B728a).